The chain runs to 250 residues: Triosephosphate isomerase (250 aa).

Residue 9-11 (NWK) participates in substrate binding. Histidine 96 functions as the Electrophile in the catalytic mechanism. Glutamate 166 acts as the Proton acceptor in catalysis. Substrate-binding positions include glycine 172, serine 212, and 233–234 (GG).

It belongs to the triosephosphate isomerase family. As to quaternary structure, homodimer.

Its subcellular location is the cytoplasm. It catalyses the reaction D-glyceraldehyde 3-phosphate = dihydroxyacetone phosphate. It functions in the pathway carbohydrate biosynthesis; gluconeogenesis. Its pathway is carbohydrate degradation; glycolysis; D-glyceraldehyde 3-phosphate from glycerone phosphate: step 1/1. Its function is as follows. Involved in the gluconeogenesis. Catalyzes stereospecifically the conversion of dihydroxyacetone phosphate (DHAP) to D-glyceraldehyde-3-phosphate (G3P). In Chlorobium luteolum (strain DSM 273 / BCRC 81028 / 2530) (Pelodictyon luteolum), this protein is Triosephosphate isomerase.